The primary structure comprises 247 residues: 3-deoxy-manno-octulosonate cytidylyltransferase (247 aa).

This sequence belongs to the KdsB family.

It localises to the cytoplasm. It carries out the reaction 3-deoxy-alpha-D-manno-oct-2-ulosonate + CTP = CMP-3-deoxy-beta-D-manno-octulosonate + diphosphate. The protein operates within nucleotide-sugar biosynthesis; CMP-3-deoxy-D-manno-octulosonate biosynthesis; CMP-3-deoxy-D-manno-octulosonate from 3-deoxy-D-manno-octulosonate and CTP: step 1/1. Its pathway is bacterial outer membrane biogenesis; lipopolysaccharide biosynthesis. In terms of biological role, activates KDO (a required 8-carbon sugar) for incorporation into bacterial lipopolysaccharide in Gram-negative bacteria. The chain is 3-deoxy-manno-octulosonate cytidylyltransferase from Methylorubrum populi (strain ATCC BAA-705 / NCIMB 13946 / BJ001) (Methylobacterium populi).